We begin with the raw amino-acid sequence, 209 residues long: MGKIEVINHPLIQHKLSILRRTDTSTKAFRELVDEIAMLMGYEVLRDLPLEDVEIETPITKTVQKQLAGKKLAIVPILRAGIGMVDGLLNLVPAAKVGHIGMYRDEETLQPVEYLVKLPEDIDQRQIFVVDPMLATGGSAILAVDSLKKRGASNIKFVCLVSAPEGVKALQEAHPDVEIFTAALDERLNEHGYIVPGLGDAGDRLFGTK.

5-phospho-alpha-D-ribose 1-diphosphate contacts are provided by residues Arg79, Arg104, and 131 to 139 (DPMLATGGS). Uracil-binding positions include Ile194 and 199-201 (GDA). Asp200 provides a ligand contact to 5-phospho-alpha-D-ribose 1-diphosphate.

This sequence belongs to the UPRTase family. Mg(2+) serves as cofactor.

It catalyses the reaction UMP + diphosphate = 5-phospho-alpha-D-ribose 1-diphosphate + uracil. Its pathway is pyrimidine metabolism; UMP biosynthesis via salvage pathway; UMP from uracil: step 1/1. With respect to regulation, allosterically activated by GTP. Its function is as follows. Catalyzes the conversion of uracil and 5-phospho-alpha-D-ribose 1-diphosphate (PRPP) to UMP and diphosphate. In Streptococcus pneumoniae serotype 4 (strain ATCC BAA-334 / TIGR4), this protein is Uracil phosphoribosyltransferase.